Consider the following 314-residue polypeptide: MPRTDNDSWAITESVGATALGVAAARAAETESDNPLINDPFARIFVDAAGDGIWSMYTNRTLLAGATDLDPDLRAPIQQMIDFMAARTAFFDEYFLATADAGVRQVVILASGLDSRAWRLPWPDGTVVYELDQPKVLEFKSATLRQHGAQPASQLVNVPIDLRQDWPKALQKAGFDPSKPCAWLAEGLVRYLPARAQDLLFERIDALSRPGSWLASNVPGAGFLDPERMRRQRADMRRMRAAAAKLVETEISDVDDLWYAEQRTAVAEWLRERGWDVSTATLPELLARYGRSIPHSGEDSIPPNLFVSAQRATS.

S-adenosyl-L-methionine contacts are provided by residues Asp132 and 161–162; that span reads DL.

It belongs to the UPF0677 family.

Functionally, exhibits S-adenosyl-L-methionine-dependent methyltransferase activity. The chain is Putative S-adenosyl-L-methionine-dependent methyltransferase MRA_3805 from Mycobacterium tuberculosis (strain ATCC 25177 / H37Ra).